We begin with the raw amino-acid sequence, 705 residues long: Elongation factor G (705 aa).

A tr-type G domain is found at 8-290; sequence ERYRNFGIMA…GVVHLLPSPA (283 aa). Residues 17 to 24, 88 to 92, and 142 to 145 contribute to the GTP site; these read AHIDAGKT, DTPGH, and NKMD. Residues 290 to 309 form a disordered region; the sequence is ADRPPVQGIDEDEKEDTRAA.

Belongs to the TRAFAC class translation factor GTPase superfamily. Classic translation factor GTPase family. EF-G/EF-2 subfamily.

The protein localises to the cytoplasm. Its function is as follows. Catalyzes the GTP-dependent ribosomal translocation step during translation elongation. During this step, the ribosome changes from the pre-translocational (PRE) to the post-translocational (POST) state as the newly formed A-site-bound peptidyl-tRNA and P-site-bound deacylated tRNA move to the P and E sites, respectively. Catalyzes the coordinated movement of the two tRNA molecules, the mRNA and conformational changes in the ribosome. In Xanthomonas oryzae pv. oryzae (strain MAFF 311018), this protein is Elongation factor G.